A 333-amino-acid polypeptide reads, in one-letter code: MLTRRILGALVGATALSLALSVPALAEPIVIKFSHVVAPDTPKGKGAAKFEELAEKYTNGAVDVEVYPNSQLYKDKEELEALQLGAVQMLAPSLAKFGPLGVQDFEVFDLPYIFKDYEALHKVTQGEAGKMLLSKLEAKGITGLAFWDNGFKIMSANTPLTMPDDFLGLKMRIQSSKVLEAEMNALGAVPQVMAFSEVYQALQTGVVDGTENPPSNMFTQKMNEVQKHATVSNHGYLGYAVIVNKQFWDGLPADVRTGLEKAMAESTDYANGIAKEENEKALQAMKDAGTTEFHELTAEERAAWEEVLTPVHDEMAERIGAETIAAVKAATAE.

The first 26 residues, 1–26 (MLTRRILGALVGATALSLALSVPALA), serve as a signal peptide directing secretion.

Belongs to the bacterial solute-binding protein 7 family. The complex comprises the extracytoplasmic solute receptor protein DctP, and the two transmembrane proteins DctQ and DctM.

The protein resides in the periplasm. In terms of biological role, part of the tripartite ATP-independent periplasmic (TRAP) transport system DctPQM involved in C4-dicarboxylates uptake. Binds C4-dicarboxylates such as fumarate, succinate, L-malate and D-malate. The protein is C4-dicarboxylate-binding periplasmic protein DctP of Rhodobacter capsulatus (Rhodopseudomonas capsulata).